We begin with the raw amino-acid sequence, 203 residues long: Secreted phosphoprotein 24 (203 aa).

The first 23 residues, 1–23, serve as a signal peptide directing secretion; sequence MEKMVMKMLVIFVFGMNHWTCTG. Cystine bridges form between C86-C97 and C110-C128. At S90 the chain carries Phosphoserine. Residues S138, S139, S166, and S175 each carry the phosphoserine modification. The tract at residues 155-174 is disordered; that stretch reads NSHLLGLTPDRSRGEPLYER. A compositionally biased stretch (basic and acidic residues) spans 164-174; the sequence is DRSRGEPLYER.

The protein belongs to the SPP2 family. In terms of processing, multiply phosphorylated at serine residues. Post-translationally, phosphorylation sites are present in the extracellular medium.

It localises to the secreted. Could coordinate an aspect of bone turnover. This chain is Secreted phosphoprotein 24 (SPP2), found in Ovis aries (Sheep).